We begin with the raw amino-acid sequence, 310 residues long: Olfactory receptor 9Q1 (310 aa).

At methionine 1–leucine 25 the chain is on the extracellular side. Residue asparagine 5 is glycosylated (N-linked (GlcNAc...) asparagine). Residues proline 26–isoleucine 46 traverse the membrane as a helical segment. Over isoleucine 47–glutamine 54 the chain is Cytoplasmic. A helical transmembrane segment spans residues leucine 55–serine 75. The Extracellular portion of the chain corresponds to isoleucine 76 to alanine 99. A disulfide bridge connects residues cysteine 97 and cysteine 189. A helical transmembrane segment spans residues glutamine 100 to tyrosine 120. Residues aspartate 121–glutamine 139 are Cytoplasmic-facing. Residues alanine 140 to threonine 160 form a helical membrane-spanning segment. Residues valine 161–valine 197 lie on the Extracellular side of the membrane. The chain crosses the membrane as a helical span at residues leucine 198 to serine 217. The Cytoplasmic portion of the chain corresponds to tyrosine 218–threonine 236. The chain crosses the membrane as a helical span at residues phenylalanine 237–methionine 257. Residues tyrosine 258–asparagine 270 are Extracellular-facing. A helical transmembrane segment spans residues arginine 271–leucine 291. Residues arginine 292–serine 310 lie on the Cytoplasmic side of the membrane.

It belongs to the G-protein coupled receptor 1 family.

The protein resides in the cell membrane. In terms of biological role, odorant receptor. This Homo sapiens (Human) protein is Olfactory receptor 9Q1 (OR9Q1).